The sequence spans 327 residues: Delta(6)-protoilludene synthase HYPSUDRAFT_138665 (327 aa).

Mg(2+)-binding residues include Asp-79, Asn-215, Ser-219, and Glu-223. The short motif at 79–83 is the DDXXD motif element; that stretch reads DEHTD. (2E,6E)-farnesyl diphosphate is bound by residues Arg-304 and Tyr-305.

The protein belongs to the terpene synthase family. Requires Mg(2+) as cofactor.

It catalyses the reaction (2E,6E)-farnesyl diphosphate = Delta(6)-protoilludene + diphosphate. Terpene cyclase that catalyzes the cyclization of farnesyl diphosphate (FPP) to delta(6)-protoilludene. The polypeptide is Delta(6)-protoilludene synthase HYPSUDRAFT_138665 (Hypholoma sublateritium (strain FD-334 SS-4)).